We begin with the raw amino-acid sequence, 487 residues long: Cell wall protein TIR4 (487 aa).

A signal peptide spans 1–22; the sequence is MAYSKITLLAALAAIAYAQTQA. 11 repeat units span residues 137-148, 149-160, 161-172, 173-184, 185-196, 197-208, 209-220, 221-232, 233-244, 245-256, and 257-268. Residues 137 to 268 form an 11 X 12 AA approximate tandem repeats, Ser-rich region; sequence SSSVAPSSSE…SVASSTSEAT (132 aa). Residues 206–299 form a disordered region; sequence EVASSSVAPS…SVSSSSAVSS (94 aa). Residues N327, N348, N368, N403, and N404 are each glycosylated (N-linked (GlcNAc...) asparagine). N465 carries the GPI-anchor amidated asparagine lipid modification. Positions 466-487 are cleaved as a propeptide — removed in mature form; that stretch reads GAAKAVIGMGAGALAAVAAMLL.

Belongs to the SRP1/TIP1 family. Post-translationally, the GPI-anchor is attached to the protein in the endoplasmic reticulum and serves to target the protein to the cell surface. There, the glucosamine-inositol phospholipid moiety is cleaved off and the GPI-modified mannoprotein is covalently attached via its lipidless GPI glycan remnant to the 1,6-beta-glucan of the outer cell wall layer.

It is found in the secreted. It localises to the cell wall. The protein resides in the membrane. Component of the cell wall. Required for anaerobic growth. This is Cell wall protein TIR4 (TIR4) from Saccharomyces cerevisiae (strain ATCC 204508 / S288c) (Baker's yeast).